The primary structure comprises 325 residues: uncharacterized protein (325 aa).

A helical transmembrane segment spans residues Ile-10–His-30. The AB hydrolase-1 domain occupies Lys-94–Ile-166.

The protein resides in the cell membrane. This is an uncharacterized protein from Bacillus subtilis (strain 168).